The following is a 787-amino-acid chain: Serine/threonine-protein kinase SCH9 (787 aa).

Disordered stretches follow at residues 1-82 (MVDF…QSGT), 132-172 (PQQQ…GSSQ), and 238-280 (SPVS…LFGQ). Residues 132-155 (PQQQQQQQAQQPPPEQQQSSAPYQ) are compositionally biased toward low complexity. Composition is skewed to polar residues over residues 156 to 172 (NSANIQQPYGNQWGSSQ) and 239 to 263 (PVSSFGHNNNQGHNGPRNMYNSNHG). The C2 domain maps to 182–354 (DKTGNKLSPA…KNNKNESEWL (173 aa)). The Protein kinase domain maps to 392–653 (FHFLRLLGKG…ARELKAHPFF (262 aa)). ATP-binding positions include 398–406 (LGKGTFGQV) and Lys-421. Residue Asp-518 is the Proton acceptor of the active site. Residues 654–729 (ADIDWDLLRA…VDDSTMDDHF (76 aa)) form the AGC-kinase C-terminal domain.

Belongs to the protein kinase superfamily. AGC Ser/Thr protein kinase family. cAMP subfamily.

The catalysed reaction is L-seryl-[protein] + ATP = O-phospho-L-seryl-[protein] + ADP + H(+). It catalyses the reaction L-threonyl-[protein] + ATP = O-phospho-L-threonyl-[protein] + ADP + H(+). Protein kinase that is part of growth control pathway which is at least partially redundant with the cAMP pathway. Plays a role in filamentous growth and virulence. Prevents hypha formation specifically under hypoxia at high CO(2) levels. Required for chlamydospore formation, distinctive morphological feature of the fungal pathogen C.albicans that can be induced to form in oxygen-limited environments and has been reported in clinical specimens. This chain is Serine/threonine-protein kinase SCH9 (SCH9), found in Candida albicans (strain SC5314 / ATCC MYA-2876) (Yeast).